The following is a 331-amino-acid chain: Ribosomal large subunit pseudouridine synthase D (331 aa).

In terms of domain architecture, S4 RNA-binding spans R25–D97. D145 is an active-site residue.

Belongs to the pseudouridine synthase RluA family.

It is found in the cytoplasm. It catalyses the reaction uridine(1911/1915/1917) in 23S rRNA = pseudouridine(1911/1915/1917) in 23S rRNA. Its function is as follows. Responsible for synthesis of pseudouridine from uracil at positions 1911, 1915 and 1917 in 23S ribosomal RNA. This chain is Ribosomal large subunit pseudouridine synthase D (rluD), found in Xanthomonas campestris pv. campestris (strain ATCC 33913 / DSM 3586 / NCPPB 528 / LMG 568 / P 25).